The sequence spans 166 residues: PTS system glucose-specific EIIA component (166 aa).

A PTS EIIA type-1 domain is found at 36-140; sequence DVVFSEKIVG…SVLTPIVISN (105 aa). Residues His-73 and His-88 each contribute to the Zn(2+) site. Catalysis depends on His-88, which acts as the Tele-phosphohistidine intermediate; for EIIA activity. His-88 bears the Phosphohistidine; by HPr mark.

Heterodimer with glycerol kinase (glpk). Zn(2+) serves as cofactor.

It is found in the cytoplasm. In terms of biological role, the phosphoenolpyruvate-dependent sugar phosphotransferase system (sugar PTS), a major carbohydrate active transport system, catalyzes the phosphorylation of incoming sugar substrates concomitantly with their translocation across the cell membrane. The enzyme II complex composed of PtsG and Crr is involved in glucose transport. This Haemophilus influenzae (strain ATCC 51907 / DSM 11121 / KW20 / Rd) protein is PTS system glucose-specific EIIA component (crr).